Here is an 876-residue protein sequence, read N- to C-terminus: Valine--tRNA ligase (876 aa).

A 'HIGH' region motif is present at residues Pro44–His54. A 'KMSKS' region motif is present at residues Lys520–Ser524. Residue Lys523 coordinates ATP. Residues Leu805 to Ala876 adopt a coiled-coil conformation.

Belongs to the class-I aminoacyl-tRNA synthetase family. ValS type 1 subfamily. Monomer.

It localises to the cytoplasm. The enzyme catalyses tRNA(Val) + L-valine + ATP = L-valyl-tRNA(Val) + AMP + diphosphate. In terms of biological role, catalyzes the attachment of valine to tRNA(Val). As ValRS can inadvertently accommodate and process structurally similar amino acids such as threonine, to avoid such errors, it has a 'posttransfer' editing activity that hydrolyzes mischarged Thr-tRNA(Val) in a tRNA-dependent manner. The protein is Valine--tRNA ligase of Staphylococcus haemolyticus (strain JCSC1435).